A 587-amino-acid polypeptide reads, in one-letter code: Aspartate--tRNA ligase (587 aa).

Residue Glu-175 participates in L-aspartate binding. The segment at 199–202 is aspartate; it reads QQFK. L-aspartate is bound by residues Arg-221 and His-446. Residue 221 to 223 participates in ATP binding; sequence RDE. An ATP-binding site is contributed by Glu-480. Arg-487 is a binding site for L-aspartate. Residue 532–535 coordinates ATP; sequence GVDR.

This sequence belongs to the class-II aminoacyl-tRNA synthetase family. Type 1 subfamily. In terms of assembly, homodimer.

It localises to the cytoplasm. The catalysed reaction is tRNA(Asp) + L-aspartate + ATP = L-aspartyl-tRNA(Asp) + AMP + diphosphate. Catalyzes the attachment of L-aspartate to tRNA(Asp) in a two-step reaction: L-aspartate is first activated by ATP to form Asp-AMP and then transferred to the acceptor end of tRNA(Asp). The chain is Aspartate--tRNA ligase from Streptomyces avermitilis (strain ATCC 31267 / DSM 46492 / JCM 5070 / NBRC 14893 / NCIMB 12804 / NRRL 8165 / MA-4680).